A 226-amino-acid chain; its full sequence is MRIDIITVLPELLRSPFEASIMKRAIDKGLVEVHFHNLRDYTTNKQKSVDDYQFGGGAGMVMMIQPIDDCITHLKSEREYDEIIYMSPDGETLNQKMANKMSMYENIIILCGHYKGVDQRVRDHFITKEISIGDYVLSGGELGALVLSDALIRLIPGVLSDETSALTDSFQDNLLSGPIYTRPADYKGWKVPEVLTSGHAAKIEKWREDAAYEHTKNRRPDLLEEH.

S-adenosyl-L-methionine contacts are provided by residues glycine 112 and 132–137; that span reads IGDYVL.

It belongs to the RNA methyltransferase TrmD family. Homodimer.

It is found in the cytoplasm. It catalyses the reaction guanosine(37) in tRNA + S-adenosyl-L-methionine = N(1)-methylguanosine(37) in tRNA + S-adenosyl-L-homocysteine + H(+). Its function is as follows. Specifically methylates guanosine-37 in various tRNAs. In Flavobacterium johnsoniae (strain ATCC 17061 / DSM 2064 / JCM 8514 / BCRC 14874 / CCUG 350202 / NBRC 14942 / NCIMB 11054 / UW101) (Cytophaga johnsonae), this protein is tRNA (guanine-N(1)-)-methyltransferase.